A 137-amino-acid polypeptide reads, in one-letter code: Ribosome-binding factor A (137 aa).

Belongs to the RbfA family. Monomer. Binds 30S ribosomal subunits, but not 50S ribosomal subunits or 70S ribosomes.

It localises to the cytoplasm. Functionally, one of several proteins that assist in the late maturation steps of the functional core of the 30S ribosomal subunit. Associates with free 30S ribosomal subunits (but not with 30S subunits that are part of 70S ribosomes or polysomes). Required for efficient processing of 16S rRNA. May interact with the 5'-terminal helix region of 16S rRNA. The protein is Ribosome-binding factor A of Trichodesmium erythraeum (strain IMS101).